Here is a 355-residue protein sequence, read N- to C-terminus: cGAMP-activated phospholipase (355 aa).

The 198-residue stretch at 17 to 214 folds into the PNPLA domain; the sequence is LSLNGGGARG…VANNPSFIGL (198 aa). Residues 21 to 26 carry the GXGXXG motif; it reads GGGARG. A GXSXG motif is present at residues 60–64; the sequence is GTSIG. The active-site Nucleophile is the Ser-62. Residue Asp-201 is the Proton acceptor of the active site. Residues 201–203 carry the DGA/G motif; the sequence is DGG.

It belongs to the patatin family.

It carries out the reaction a 1,2-diacyl-sn-glycero-3-phosphocholine + H2O = a 2-acyl-sn-glycero-3-phosphocholine + a fatty acid + H(+). The enzyme catalyses 1,2-di-(9Z-octadecenoyl)-sn-glycero-3-phosphoethanolamine + 2 H2O = sn-glycero-3-phosphoethanolamine + 2 (9Z)-octadecenoate + 2 H(+). Its activity is regulated as follows. Phospholipase activity is specifically activated upon 3',3'-cGAMP (cGAMP) binding. Is not activated by the other cyclic dinucleotides 3',3'-cUAMP, 3',3'-c-diAMP and 3',3'-c-diGMP. Therefore, is specifically activated by only the nucleotide synthesized from its adjacently encoded nucleotidyltransferase (DncV). The cGAMP-activation of lipase is inhibited by T4 phage protein Acb2 (Vs.4). Effector phospholipase of a CBASS antiviral system. CBASS (cyclic oligonucleotide-based antiphage signaling system) provides immunity against bacteriophages. The CD-NTase protein (DncV) synthesizes cyclic nucleotides in response to infection; these serve as specific second messenger signals. The signals activate a diverse range of effectors, leading to bacterial cell death and thus abortive phage infection. A type II-A(GA) CBASS system. Its function is as follows. Phospholipase that is activated upon binding to the cyclic dinucleotide (CDN) second messenger 3',3'-cyclic GMP-AMP (3',3'-cGAMP). Then degrades phosphatidylethanolamine (PE) and phosphatidylglycerol (PG), the major phospholipids in the cell membrane of V.cholerae, releasing 16:1 and 18:1 free fatty acids. Upon expression in E.coli with cognate DncV, the cell inner membrane shrinks and separates from the cell wall. In terms of biological role, protects E.coli against phage infection. When the CBASS operon (capV-dncV-cap2-cap3) is introduced in E.coli MG1655 there is about 100-fold protection against phages P1 and T2. When the operon is introduced in E.coli MG1655 there is a more than 10(3) decrease in the efficiency of T2 plaque formation. Protects 100-fold against phage T5, offers no protection against T7. When the operon is introduced in E.coli MG1655 it protects against phages T2, T4, T5 and T6. Another paper shows the operon confers protection against phages P1, T2, T5 and T6 but not T4 or lambda. This Vibrio cholerae serotype O1 (strain ATCC 39315 / El Tor Inaba N16961) protein is cGAMP-activated phospholipase.